A 313-amino-acid chain; its full sequence is Probable RuBisCO transcriptional regulator (313 aa).

The HTH lysR-type domain maps to 6-63 (FTLDQLLILKAIAAQGSFKKAADSLYISQPAVSMQVQNIEKQLNVQLLDRGGRRANLT). The segment at residues 23–42 (FKKAADSLYISQPAVSMQVQ) is a DNA-binding region (H-T-H motif).

Belongs to the LysR transcriptional regulatory family.

The protein resides in the plastid. Its subcellular location is the chloroplast. Trans-acting transcriptional regulator of RuBisCO genes (rbcL and rbcS) expression. This chain is Probable RuBisCO transcriptional regulator (rbcR), found in Chlorokybus atmophyticus (Soil alga).